Consider the following 328-residue polypeptide: 3-dehydroquinate synthase (328 aa).

Belongs to the archaeal-type DHQ synthase family.

It carries out the reaction 2-amino-2,3,7-trideoxy-D-lyxo-hept-6-ulosonate + NAD(+) + H2O = 3-dehydroquinate + NH4(+) + NADH + H(+). Catalyzes the oxidative deamination and cyclization of 2-amino-3,7-dideoxy-D-threo-hept-6-ulosonic acid (ADH) to yield 3-dehydroquinate (DHQ), which is fed into the canonical shikimic pathway of aromatic amino acid biosynthesis. This Methanosphaerula palustris (strain ATCC BAA-1556 / DSM 19958 / E1-9c) protein is 3-dehydroquinate synthase.